Reading from the N-terminus, the 43-residue chain is Protein PsbN (43 aa).

A helical membrane pass occupies residues 5–27 (TLIAISISGLLVSFTGYALYTAF).

The protein belongs to the PsbN family.

Its subcellular location is the plastid. The protein resides in the chloroplast thylakoid membrane. Functionally, may play a role in photosystem I and II biogenesis. This Phaseolus vulgaris (Kidney bean) protein is Protein PsbN.